A 528-amino-acid polypeptide reads, in one-letter code: Sensory rhodopsin I transducer (528 aa).

2 consecutive transmembrane segments (helical) span residues 11 to 31 (GAKL…VGVV) and 35 to 55 (VAST…INAA). 2 consecutive HAMP domains span residues 55 to 107 (AETV…DRLS) and 142 to 195 (TAYQ…ETIE). Positions 214-455 (TSRRVQQEVD…ATADSIADVT (242 aa)) constitute a Methyl-accepting transducer domain. Glutamate 259 is modified (glutamate methyl ester (Glu)).

Belongs to the methyl-accepting chemotaxis (MCP) protein family. Interacts with Sop1.

It localises to the cell membrane. Its function is as follows. Transduces signals from the phototaxis receptor sensory rhodopsin I (Sop1). The sequence is that of Sensory rhodopsin I transducer (htr1) from Haloarcula marismortui (strain ATCC 43049 / DSM 3752 / JCM 8966 / VKM B-1809) (Halobacterium marismortui).